The primary structure comprises 645 residues: Acetyl-coenzyme A synthetase (645 aa).

CoA is bound by residues 190-193 and T309; that span reads RGGR. ATP is bound by residues 385–387, 409–414, D498, and R513; these read GEP and DTWWQT. CoA is bound at residue S521. Residue R524 participates in ATP binding. Mg(2+)-binding residues include V535, H537, and V540. R582 is a CoA binding site. K607 carries the post-translational modification N6-acetyllysine.

It belongs to the ATP-dependent AMP-binding enzyme family. Mg(2+) serves as cofactor. Acetylated. Deacetylation by the SIR2-homolog deacetylase activates the enzyme.

It carries out the reaction acetate + ATP + CoA = acetyl-CoA + AMP + diphosphate. Functionally, catalyzes the conversion of acetate into acetyl-CoA (AcCoA), an essential intermediate at the junction of anabolic and catabolic pathways. AcsA undergoes a two-step reaction. In the first half reaction, AcsA combines acetate with ATP to form acetyl-adenylate (AcAMP) intermediate. In the second half reaction, it can then transfer the acetyl group from AcAMP to the sulfhydryl group of CoA, forming the product AcCoA. The sequence is that of Acetyl-coenzyme A synthetase from Methylocella silvestris (strain DSM 15510 / CIP 108128 / LMG 27833 / NCIMB 13906 / BL2).